Reading from the N-terminus, the 769-residue chain is Amino-acid acetyltransferase, mitochondrial (769 aa).

Residues Leu-150–Ser-172 are disordered. The span at Gln-159–Ser-172 shows a compositional bias: polar residues. Residues Met-590–Pro-759 form the N-acetyltransferase domain.

This sequence belongs to the acetyltransferase family.

It localises to the mitochondrion. The catalysed reaction is L-glutamate + acetyl-CoA = N-acetyl-L-glutamate + CoA + H(+). Its pathway is amino-acid biosynthesis; L-arginine biosynthesis; N(2)-acetyl-L-ornithine from L-glutamate: step 1/4. In terms of biological role, N-acetylglutamate synthase involved in arginine biosynthesis. This Penicillium rubens (strain ATCC 28089 / DSM 1075 / NRRL 1951 / Wisconsin 54-1255) (Penicillium chrysogenum) protein is Amino-acid acetyltransferase, mitochondrial (arg2).